Consider the following 142-residue polypeptide: Hemoglobin subunit alpha-1/2 (142 aa).

Residues 2–142 (VLSADDKTNI…VSTVLTSKYR (141 aa)) enclose the Globin domain. Residue S4 is modified to Phosphoserine. At K8 the chain carries N6-succinyllysine. T9 carries the post-translational modification Phosphothreonine. K12 is subject to N6-succinyllysine. Position 17 is an N6-acetyllysine; alternate (K17). At K17 the chain carries N6-succinyllysine; alternate. At Y25 the chain carries Phosphotyrosine. K41 carries the N6-succinyllysine modification. S50 bears the Phosphoserine mark. An O2-binding site is contributed by H59. H88 serves as a coordination point for heme b. Residue S103 is modified to Phosphoserine. Residue T109 is modified to Phosphothreonine. S125 and S132 each carry phosphoserine. Residues T135 and T138 each carry the phosphothreonine modification. A Phosphoserine modification is found at S139.

It belongs to the globin family. In terms of assembly, heterotetramer of two alpha chains and two beta chains. In terms of tissue distribution, red blood cells.

Functionally, involved in oxygen transport from the lung to the various peripheral tissues. Its function is as follows. Hemopressin acts as an antagonist peptide of the cannabinoid receptor CNR1. Hemopressin-binding efficiently blocks cannabinoid receptor CNR1 and subsequent signaling. The chain is Hemoglobin subunit alpha-1/2 (Hba1) from Rattus norvegicus (Rat).